Here is a 944-residue protein sequence, read N- to C-terminus: Trehalose monomycolate exporter MmpL3 (944 aa).

Residues 1–13 (MFAWWGRTVYRYR) lie on the Cytoplasmic side of the membrane. Residues 14-34 (FIVIGVMVALCLGGGVFGLSL) traverse the membrane as a helical segment. At 35–185 (GKHVTQSGFY…TIATDQRRME (151 aa)) the chain is on the periplasmic side. 40-44 (QSGFY) contacts a 1,2-diacylglycero-3-phosphoethanolamine. A helical membrane pass occupies residues 186–206 (VLALPLVAVVLFFVFGGVIAA). Residues 207–209 (GLP) lie on the Cytoplasmic side of the membrane. The chain crosses the membrane as a helical span at residues 210–230 (VMVGGLCIAGALGIMRFLAIF). At 231-235 (GPVHY) the chain is on the periplasmic side. Residues 236 to 256 (FAQPVVSLIGLGIAIDYGLFI) traverse the membrane as a helical segment. The Cytoplasmic segment spans residues 257–286 (VSRFREEIAEGYDTETAVRRTVITAGRTVT). The helical transmembrane segment at 287–307 (FSAVLIVASAIGLLLFPQGFL) threads the bilayer. The Periplasmic segment spans residues 308 to 314 (KSLTYAT). Residues 315-335 (IASVMLSAILSITVLPACLGI) form a helical membrane-spanning segment. Topologically, residues 336-396 (LGKHVDALGV…KLVNRVMKRP (61 aa)) are cytoplasmic. A helical membrane pass occupies residues 397–417 (VLFAAPIVIIMILLIIPVGKL). The Periplasmic portion of the chain corresponds to 418-562 (SLGGISEKYL…HGLFAKMPLM (145 aa)). A helical transmembrane segment spans residues 563–583 (VVILLTTTIVLMFLAFGSVVL). Residues 584–586 (PIK) lie on the Cytoplasmic side of the membrane. The chain crosses the membrane as a helical span at residues 587-607 (ATLMSALTLGSTMGILTWIFV). Topologically, residues 608–616 (DGHFSKWLN) are periplasmic. The chain crosses the membrane as a helical span at residues 617 to 637 (FTPTPLTAPVIGLIIALVFGL). Over 638–672 (STDYEVFLVSRMVEARERGMSTQEAIRIGTAATGR) the chain is Cytoplasmic. Residues 673 to 693 (IITAAALIVAVVAGAFVFSDL) form a helical membrane-spanning segment. Topologically, residues 694 to 698 (VMMKY) are periplasmic. A helical transmembrane segment spans residues 699 to 719 (LAFGLMAALLLDATVVRMFLV). Residues 720–944 (PSVMKLLGDD…QDLLRREGRL (225 aa)) lie on the Cytoplasmic side of the membrane. Residues 778–944 (AAGDPRPPHD…QDLLRREGRL (167 aa)) form a disordered region. Positions 791 to 828 (PLAESPRPARSSPASSPELTPALEATAAPAAPSGASTT) are enriched in low complexity. Positions 829–839 (RMQIGSSTEPP) are enriched in polar residues. Positions 855 to 866 (STPPPTPTPPSA) are enriched in pro residues.

This sequence belongs to the resistance-nodulation-cell division (RND) (TC 2.A.6) family. MmpL subfamily. As to quaternary structure, monomer. Interacts with TtfA (via N-terminus); active trehalose monomycolate (TMM) biosynthesis is not required for the complex formation.

Its subcellular location is the cell inner membrane. It is found in the cell septum. The protein resides in the cell tip. Its activity is regulated as follows. Inhibited by the antitubercular drug SQ109. Also inhibited by several other compounds such as the pyrrole derivative BM212, the adamantyl urea derivative AU1235, the benzimidazole C215, indoleamides, tetrahydropyrazolo[1,5-a]pyrimidine-3-carboxamide (THPP) and N-benzyl-6',7'-dihydrospiro[piperidine-4,4'-thieno[3,2-c]pyran] (Spiro) analogs. Inhibitory effects of these compounds, including SQ109, are most likely due to their ability to dissipate the transmembrane electrochemical proton gradient. Its function is as follows. Transports trehalose monomycolate (TMM) to the cell wall. Flips TMM across the inner membrane. Membrane potential is not required for this function. Transports probably phosphatidylethanolamine (PE) as well. Binds specifically both TMM and PE, but not trehalose dimycolate (TDM). Also binds diacylglycerol (DAG) and other phospholipids, including phosphatidylglycerol (PG), phosphatidylinositol (PI), and cardiolipin (CDL). Contributes to membrane potential, cell wall composition, antibiotic susceptibility and fitness. Could also be part of a heme-iron acquisition system. In terms of biological role, is the target of the antitubercular drug SQ109. In Mycobacterium tuberculosis (strain ATCC 25618 / H37Rv), this protein is Trehalose monomycolate exporter MmpL3 (mmpL3).